A 528-amino-acid polypeptide reads, in one-letter code: uncharacterized protein (528 aa).

2 stretches are compositionally biased toward basic residues: residues 1 to 16 (MGKA…KNHL) and 25 to 43 (QLAR…SHTK). Residues 1–59 (MGKASKATKKFTKNHLKNTIERRKQLARSKKVYGTKNRNSHTKNKLESGTNDNNKNKED) are disordered.

It belongs to the NOC2 family.

The protein localises to the nucleus. Its subcellular location is the nucleolus. This is an uncharacterized protein from Schizosaccharomyces pombe (strain 972 / ATCC 24843) (Fission yeast).